Reading from the N-terminus, the 271-residue chain is Vacuolar arginine/histidine antiporter stm1 (271 aa).

The PQ-loop 1 domain occupies 14–80 (LTELSSFLGA…GNVSSTVLVL (67 aa)). Transmembrane regions (helical) follow at residues 17-37 (LSSF…IPQL), 49-69 (ISDL…LGSI), and 77-97 (VLVL…QIYY). A Phosphoserine modification is found at Ser119. The next 4 helical transmembrane spans lie at 144 to 164 (FGVM…IISS), 178 to 198 (PFTA…PQII), 211 to 231 (IIFF…ILVF), and 245 to 265 (PWIL…YQFI). The PQ-loop 2 domain occupies 185–239 (SSVLYFCARIPQIIKNHKAKSTEGLSIIFFVLASVGNTSYAFSILVFPASDYLNY).

This sequence belongs to the laat-1 family.

Its subcellular location is the vacuole membrane. It catalyses the reaction L-histidine(out) + L-arginine(in) = L-histidine(in) + L-arginine(out). Its function is as follows. Amino acid transporter that moves basic amino acids across the vacuolar membrane. Appears to function as an arginine/histidine antiporter. This Schizosaccharomyces pombe (strain 972 / ATCC 24843) (Fission yeast) protein is Vacuolar arginine/histidine antiporter stm1 (stm1).